The following is a 150-amino-acid chain: C-type lectin mosGCTL-7 (150 aa).

The first 17 residues, 1 to 17 (MQLVHVLVVLLSVVAHA), serve as a signal peptide directing secretion. The C-type lectin domain occupies 18–140 (KKFFIPNLKA…CRGFKAYIVC (123 aa)). A glycan (N-linked (GlcNAc...) asparagine) is linked at Asn67. Cys111 and Cys131 are joined by a disulfide.

As to quaternary structure, interacts with putative receptor-type tyrosine-protein phosphatase mosPTP-1; the interaction probably mediates the recruitment of Japanese encephalitis virus particles in complex with C-type lectin mosGCTL-7 to the cell surface. (Microbial infection) Interacts with envelope protein E (glycosylated) of Japanese encephalitis virus in a calcium-dependent manner.

It localises to the secreted. In terms of biological role, carbohydrate-binding protein. (Microbial infection) Facilitates Japanese encephalitis virus infection in mosquitoes probably via capturing viral particles and presenting them to a ligand on the cell surface, thereby facilitating viral entry. The protein is C-type lectin mosGCTL-7 of Aedes aegypti (Yellowfever mosquito).